The following is a 411-amino-acid chain: Phosphopentomutase (411 aa).

Mn(2+)-binding residues include D14, D306, H311, D347, H348, and H359.

The protein belongs to the phosphopentomutase family. Mn(2+) serves as cofactor.

The protein localises to the cytoplasm. The enzyme catalyses 2-deoxy-alpha-D-ribose 1-phosphate = 2-deoxy-D-ribose 5-phosphate. It carries out the reaction alpha-D-ribose 1-phosphate = D-ribose 5-phosphate. Its pathway is carbohydrate degradation; 2-deoxy-D-ribose 1-phosphate degradation; D-glyceraldehyde 3-phosphate and acetaldehyde from 2-deoxy-alpha-D-ribose 1-phosphate: step 1/2. In terms of biological role, isomerase that catalyzes the conversion of deoxy-ribose 1-phosphate (dRib-1-P) and ribose 1-phosphate (Rib-1-P) to deoxy-ribose 5-phosphate (dRib-5-P) and ribose 5-phosphate (Rib-5-P), respectively. The polypeptide is Phosphopentomutase (Lactococcus lactis subsp. cremoris (strain MG1363)).